Consider the following 323-residue polypeptide: Prostaglandin F synthase 2 (323 aa).

NADP(+) contacts are provided by residues 20-24 and Asp50; that span reads GFGTY. The Proton donor role is filled by Tyr55. Residue His117 participates in substrate binding. Residues 166-167, Gln190, 216-221, and 270-280 each bind NADP(+); these read SN, YAALGA, and KSFNKKRIKEN.

Belongs to the aldo/keto reductase family. As to quaternary structure, monomer.

It is found in the cytoplasm. It catalyses the reaction prostaglandin F2alpha + NADP(+) = prostaglandin D2 + NADPH + H(+). It functions in the pathway lipid metabolism; prostaglandin biosynthesis. Functionally, catalyzes the reduction of PGD(2) and PGH(2) to PGF(2 alpha) and a stereoisomer, respectively. It has a broad substrate specificity and also reduces other carbonyl compounds. This chain is Prostaglandin F synthase 2, found in Bos taurus (Bovine).